A 320-amino-acid polypeptide reads, in one-letter code: Methylenetetrahydrofolate dehydrogenase [NAD(+)] (320 aa).

Cys-152 is an active-site residue. Residues 187-188 (RS) and 210-211 (DI) contribute to the NAD(+) site.

This sequence belongs to the tetrahydrofolate dehydrogenase/cyclohydrolase family. Homodimer.

Its subcellular location is the cytoplasm. It localises to the nucleus. It carries out the reaction (6R)-5,10-methylene-5,6,7,8-tetrahydrofolate + NAD(+) = (6R)-5,10-methenyltetrahydrofolate + NADH. It functions in the pathway one-carbon metabolism; tetrahydrofolate interconversion. Its function is as follows. Catalyzes oxidation of cytoplasmic one-carbon units for purine biosynthesis. This chain is Methylenetetrahydrofolate dehydrogenase [NAD(+)] (mtd1), found in Schizosaccharomyces pombe (strain 972 / ATCC 24843) (Fission yeast).